The chain runs to 38 residues: 4 kDa defensin (38 aa).

Cystine bridges form between Cys-4–Cys-25, Cys-11–Cys-33, and Cys-15–Cys-35.

This sequence belongs to the invertebrate defensin family. Type 2 subfamily.

The protein resides in the secreted. Dual-function peptide with antimicrobial and potassium channel-blocking activities. Shows inhibitory activity against Gram-positive bacteria such as M.luteus, S.aureus, B.subtilis, and M.luteus as well as methicillin-resistant S.aureus (MIC=0.1-20 uM). Does not act on bacteria by disrupting membranes. Also moderately inhibits Kv1.1/KCNA1, Kv1.2/KCNA2, and Kv1.3/KCNA3 potassium channels. Inhibits potassium channels by interacting with the pore region. Does not show hemolytic activity. The protein is 4 kDa defensin of Leiurus hebraeus (Hebrew deathstalker scorpion).